A 290-amino-acid chain; its full sequence is 33 kDa chaperonin (290 aa).

Disulfide bonds link Cys-235–Cys-237 and Cys-268–Cys-271.

This sequence belongs to the HSP33 family. Post-translationally, under oxidizing conditions two disulfide bonds are formed involving the reactive cysteines. Under reducing conditions zinc is bound to the reactive cysteines and the protein is inactive.

It is found in the cytoplasm. Functionally, redox regulated molecular chaperone. Protects both thermally unfolding and oxidatively damaged proteins from irreversible aggregation. Plays an important role in the bacterial defense system toward oxidative stress. In Streptococcus pyogenes serotype M49, this protein is 33 kDa chaperonin.